Reading from the N-terminus, the 531-residue chain is Probable bifunctional methylthioribulose-1-phosphate dehydratase/enolase-phosphatase E1 2 (531 aa).

Residues 1 to 248 (MGVPSEGAVG…AIKLHQLGLD (248 aa)) are methylthioribulose-1-phosphate dehydratase. Cysteine 120 contacts substrate. The Zn(2+) site is built by histidine 138 and histidine 140. The active-site Proton donor/acceptor; for methylthioribulose-1-phosphate dehydratase activity is the glutamate 163. Histidine 213 provides a ligand contact to Zn(2+). The tract at residues 292-531 (ILLDIEGTTT…FRTIETFLEI (240 aa)) is enolase-phosphatase E1. Mg(2+) is bound by residues aspartate 295 and glutamate 297. Substrate-binding positions include 430–431 (SS) and lysine 464. Aspartate 490 is a Mg(2+) binding site.

This sequence in the N-terminal section; belongs to the aldolase class II family. MtnB subfamily. In the C-terminal section; belongs to the HAD-like hydrolase superfamily. MasA/MtnC family. It depends on Zn(2+) as a cofactor. Mg(2+) is required as a cofactor.

It catalyses the reaction 5-(methylsulfanyl)-D-ribulose 1-phosphate = 5-methylsulfanyl-2,3-dioxopentyl phosphate + H2O. The catalysed reaction is 5-methylsulfanyl-2,3-dioxopentyl phosphate + H2O = 1,2-dihydroxy-5-(methylsulfanyl)pent-1-en-3-one + phosphate. Its pathway is amino-acid biosynthesis; L-methionine biosynthesis via salvage pathway; L-methionine from S-methyl-5-thio-alpha-D-ribose 1-phosphate: step 2/6. It functions in the pathway amino-acid biosynthesis; L-methionine biosynthesis via salvage pathway; L-methionine from S-methyl-5-thio-alpha-D-ribose 1-phosphate: step 3/6. The protein operates within amino-acid biosynthesis; L-methionine biosynthesis via salvage pathway; L-methionine from S-methyl-5-thio-alpha-D-ribose 1-phosphate: step 4/6. The sequence is that of Probable bifunctional methylthioribulose-1-phosphate dehydratase/enolase-phosphatase E1 2 from Vitis vinifera (Grape).